The following is a 57-amino-acid chain: Large ribosomal subunit protein bL32 (57 aa).

The protein belongs to the bacterial ribosomal protein bL32 family.

In Bacillus pumilus (strain SAFR-032), this protein is Large ribosomal subunit protein bL32.